Reading from the N-terminus, the 605-residue chain is uncharacterized protein (605 aa).

The interval 111 to 151 (VNVNDGKPNDIELSSTSKTENDPPLSLHTTPDDLQGNGVNV) is disordered.

The protein resides in the golgi apparatus. This is an uncharacterized protein from Schizosaccharomyces pombe (strain 972 / ATCC 24843) (Fission yeast).